The following is a 120-amino-acid chain: MGAQEIIRSIEAEYTKSDLPTIYVGDTVKVGVRIQEGGKERVQPYEGVVIANSGGGINESITVRRIFQGVGVERVFLLHSPAVASVQVLRRGRVRRAKLYYLRDRVGKATRVKQRFDRSI.

The protein belongs to the bacterial ribosomal protein bL19 family.

This protein is located at the 30S-50S ribosomal subunit interface and may play a role in the structure and function of the aminoacyl-tRNA binding site. The polypeptide is Large ribosomal subunit protein bL19 (Synechococcus sp. (strain ATCC 27144 / PCC 6301 / SAUG 1402/1) (Anacystis nidulans)).